Reading from the N-terminus, the 340-residue chain is L-threonine 3-dehydrogenase (340 aa).

C38 is a Zn(2+) binding site. Active-site charge relay system residues include T40 and H43. H63, E64, C93, C96, C99, and C107 together coordinate Zn(2+). Residues I175, D195, R200, 262–264, and 286–287 each bind NAD(+); these read LGI and IY.

This sequence belongs to the zinc-containing alcohol dehydrogenase family. In terms of assembly, homotetramer. The cofactor is Zn(2+).

Its subcellular location is the cytoplasm. It carries out the reaction L-threonine + NAD(+) = (2S)-2-amino-3-oxobutanoate + NADH + H(+). Its pathway is amino-acid degradation; L-threonine degradation via oxydo-reductase pathway; glycine from L-threonine: step 1/2. Catalyzes the NAD(+)-dependent oxidation of L-threonine to 2-amino-3-ketobutyrate. In Legionella pneumophila subsp. pneumophila (strain Philadelphia 1 / ATCC 33152 / DSM 7513), this protein is L-threonine 3-dehydrogenase.